Here is a 282-residue protein sequence, read N- to C-terminus: ATP phosphoribosyltransferase (282 aa).

This sequence belongs to the ATP phosphoribosyltransferase family. Long subfamily. The cofactor is Mg(2+).

The protein resides in the cytoplasm. It carries out the reaction 1-(5-phospho-beta-D-ribosyl)-ATP + diphosphate = 5-phospho-alpha-D-ribose 1-diphosphate + ATP. The protein operates within amino-acid biosynthesis; L-histidine biosynthesis; L-histidine from 5-phospho-alpha-D-ribose 1-diphosphate: step 1/9. Its activity is regulated as follows. Feedback inhibited by histidine. Functionally, catalyzes the condensation of ATP and 5-phosphoribose 1-diphosphate to form N'-(5'-phosphoribosyl)-ATP (PR-ATP). Has a crucial role in the pathway because the rate of histidine biosynthesis seems to be controlled primarily by regulation of HisG enzymatic activity. The chain is ATP phosphoribosyltransferase from Saccharopolyspora erythraea (strain ATCC 11635 / DSM 40517 / JCM 4748 / NBRC 13426 / NCIMB 8594 / NRRL 2338).